Consider the following 366-residue polypeptide: Chorismate synthase (366 aa).

NADP(+) is bound by residues Arg48 and Arg54. FMN-binding positions include 125–127, 238–239, Gly278, 293–297, and Arg319; these read RSS, NA, and KPTSS.

It belongs to the chorismate synthase family. Homotetramer. The cofactor is FMNH2.

The enzyme catalyses 5-O-(1-carboxyvinyl)-3-phosphoshikimate = chorismate + phosphate. The protein operates within metabolic intermediate biosynthesis; chorismate biosynthesis; chorismate from D-erythrose 4-phosphate and phosphoenolpyruvate: step 7/7. Catalyzes the anti-1,4-elimination of the C-3 phosphate and the C-6 proR hydrogen from 5-enolpyruvylshikimate-3-phosphate (EPSP) to yield chorismate, which is the branch point compound that serves as the starting substrate for the three terminal pathways of aromatic amino acid biosynthesis. This reaction introduces a second double bond into the aromatic ring system. In Pseudoalteromonas atlantica (strain T6c / ATCC BAA-1087), this protein is Chorismate synthase.